The sequence spans 615 residues: Putative binding protein BRA0576/BS1330_II0571 (615 aa).

A signal peptide spans 1-29 (MLNRFIAFFRSVFLIGLVATAFGALPARA).

It belongs to the bacterial solute-binding protein 5 family.

Its subcellular location is the periplasm. The chain is Putative binding protein BRA0576/BS1330_II0571 from Brucella suis biovar 1 (strain 1330).